A 480-amino-acid polypeptide reads, in one-letter code: Adenosylhomocysteinase (480 aa).

Residues T63, D142, and E203 each contribute to the substrate site. 204–206 (TTT) is an NAD(+) binding site. Substrate contacts are provided by K233 and D237. NAD(+)-binding positions include N238, 267 to 272 (GYGDVG), E290, N325, 346 to 348 (IGH), and N394.

Belongs to the adenosylhomocysteinase family. NAD(+) serves as cofactor.

It localises to the cytoplasm. The enzyme catalyses S-adenosyl-L-homocysteine + H2O = L-homocysteine + adenosine. It participates in amino-acid biosynthesis; L-homocysteine biosynthesis; L-homocysteine from S-adenosyl-L-homocysteine: step 1/1. Its function is as follows. May play a key role in the regulation of the intracellular concentration of adenosylhomocysteine. The protein is Adenosylhomocysteinase of Xylella fastidiosa (strain M12).